Here is a 374-residue protein sequence, read N- to C-terminus: Nudix hydrolase 20, chloroplastic (374 aa).

Residues 1-49 constitute a chloroplast transit peptide; the sequence is MASGFCSLALTVTTSLFSSHAITRRVLPILRWRSSSMSLSPLRHSRALS. In terms of domain architecture, Nudix hydrolase spans 205–346; it reads GYGVHMNGYV…KANCSLVIID (142 aa). Positions 244-265 match the Nudix box motif; it reads GGLPHGISCGGNLVKECEEEAG. 2 residues coordinate Mg(2+): glutamate 259 and glutamate 263.

This sequence belongs to the Nudix hydrolase family. Mg(2+) serves as cofactor. It depends on Mn(2+) as a cofactor. Expressed in leaves and inflorescences.

The protein localises to the plastid. The protein resides in the chloroplast. Functionally, probably mediates the hydrolysis of some nucleoside diphosphate derivatives. This Arabidopsis thaliana (Mouse-ear cress) protein is Nudix hydrolase 20, chloroplastic (NUDT20).